The following is a 383-amino-acid chain: UDP-N-acetylenolpyruvoylglucosamine reductase (383 aa).

In terms of domain architecture, FAD-binding PCMH-type spans 42-212 (LSCQAMQLIT…TRVGFKLHKD (171 aa)). R189 is an active-site residue. Residue S267 is the Proton donor of the active site. The active site involves E369.

It belongs to the MurB family. FAD serves as cofactor.

It localises to the cytoplasm. It carries out the reaction UDP-N-acetyl-alpha-D-muramate + NADP(+) = UDP-N-acetyl-3-O-(1-carboxyvinyl)-alpha-D-glucosamine + NADPH + H(+). It functions in the pathway cell wall biogenesis; peptidoglycan biosynthesis. Cell wall formation. This Psychrobacter sp. (strain PRwf-1) protein is UDP-N-acetylenolpyruvoylglucosamine reductase.